A 703-amino-acid chain; its full sequence is NADH-quinone oxidoreductase chain 12 (703 aa).

16 helical membrane-spanning segments follow: residues 4–24 (FVLF…RAIG), 30–50 (YLTT…FLSF), 79–99 (LTAI…MYSL), 116–136 (ARFF…VTAD), 138–158 (LLQM…LIGF), 179–199 (GDFG…SVQF), 224–244 (ANLL…QLLL), 256–276 (TPVS…FLVC), 290–310 (NFIV…GLVQ), 325–345 (LGYM…FHLL), 346–366 (THAF…HAMH), 381–401 (IPLT…VGIP), 415–435 (AIIE…VIAA), 475–495 (LGVL…PFFG), 580–600 (VSPF…YIAN), and 679–699 (LFHY…WVMM).

The protein belongs to the complex I subunit 5 family. NDH-1 is composed of at least 14 different subunits, Nqo1 to Nqo14. The complex has a L-shaped structure, with the hydrophobic arm (subunits Nqo7, Nqo8, Nqo10 to Nqo14) embedded in the inner membrane and the hydrophilic peripheral arm (subunits Nqo1 to Nqo6, Nqo9) protruding into the bacterial cytoplasm. The hydrophilic domain contains all the redox centers.

It is found in the cell inner membrane. The catalysed reaction is a quinone + NADH + 5 H(+)(in) = a quinol + NAD(+) + 4 H(+)(out). Its function is as follows. NDH-1 shuttles electrons from NADH, via FMN and iron-sulfur (Fe-S) centers, to quinones in the respiratory chain. The immediate electron acceptor for the enzyme in this species is believed to be ubiquinone. Couples the redox reaction to proton translocation (for every two electrons transferred, four hydrogen ions are translocated across the cytoplasmic membrane), and thus conserves the redox energy in a proton gradient. The chain is NADH-quinone oxidoreductase chain 12 from Paracoccus denitrificans.